A 545-amino-acid chain; its full sequence is MAAKDVKFGNDARIKMLRGVNILADAVKVTLGPKGRNVVLDKSFGSPTITKDGVSVAREIELEDKFENMGAQMVKEVASKANDAAGDGTTTATVLAQSIITEGLKAVAAGMNPMDLKRGIDKAVIAAVEELKKLSVPCSDSKAIAQVGTISANSDSTVGELIAQAMEKVGKEGVITVEEGSGLQDELDVVEGMQFDRGYLSPYFINKPETGSIELESPFILLADKKISNIREMLPVLEAVAKAGKPLLIIAEDVEGEALATLVVNTMRGIVKVAAVKAPGFGDRRKAMLQDIATLTAGTVISEEIGLELEKTTLEDLGQAKRVVINKDTTIIIDGVGDEAAIQGRVAQIRQQIEDATSDYDKEKLQERVAKLAGGVAVIKVGAATEVEMKEKKARVEDALHATRAAVEEGVVAGGGVALIRAAHAIAGLKGDNEDQNVGIKVALRAMESPLRQIVVNAGEEASVIANKVKAGEGSFGYNAYTEEYGDMIAMGILDPTKVTRSALQYAASIAGLMITTECMVTDLPRDDKGADMGAGGMGGMGGMM.

Residues 30–33 (TLGP), Lys51, 87–91 (DGTTT), Gly415, and Asp495 each bind ATP.

Belongs to the chaperonin (HSP60) family. As to quaternary structure, forms a cylinder of 14 subunits composed of two heptameric rings stacked back-to-back. Interacts with the co-chaperonin GroES.

It is found in the cytoplasm. The enzyme catalyses ATP + H2O + a folded polypeptide = ADP + phosphate + an unfolded polypeptide.. Its function is as follows. Together with its co-chaperonin GroES, plays an essential role in assisting protein folding. The GroEL-GroES system forms a nano-cage that allows encapsulation of the non-native substrate proteins and provides a physical environment optimized to promote and accelerate protein folding. This chain is Chaperonin GroEL, found in Yersinia pestis bv. Antiqua (strain Antiqua).